A 222-amino-acid chain; its full sequence is FCS-Like Zinc finger 13 (222 aa).

The FLZ-type zinc finger occupies 149–192 (EFLSSCCLCKKKLQGKDIYMYKGEMGFCSAECRSVQIMNDERQE).

It belongs to the FLZ family. Interacts with KIN10 and KIN11 via its FLZ-type zinc finger domain. Interacts with KINB1, KINB2, KINB3 and SNF4 via its N-terminal part.

The protein resides in the nucleus. Its subcellular location is the cytoplasm. In terms of biological role, may act as an adapter to facilitate the interaction of SnRK1 complex with effector proteins, conferring tissue- and stimulus-type specific differences in the SnRK1 regulation pathway. This chain is FCS-Like Zinc finger 13, found in Arabidopsis thaliana (Mouse-ear cress).